The sequence spans 332 residues: Glycerol-3-phosphate dehydrogenase [NAD(P)+] (332 aa).

NADPH contacts are provided by Trp-11, Arg-30, and Lys-108. Sn-glycerol 3-phosphate is bound by residues Lys-108, Gly-137, and Ser-139. Residue Ala-141 coordinates NADPH. Sn-glycerol 3-phosphate-binding residues include Lys-192, Asp-245, Ser-255, Arg-256, and Asn-257. The active-site Proton acceptor is Lys-192. Residue Arg-256 participates in NADPH binding. 2 residues coordinate NADPH: Val-280 and Glu-282.

This sequence belongs to the NAD-dependent glycerol-3-phosphate dehydrogenase family.

It is found in the cytoplasm. It catalyses the reaction sn-glycerol 3-phosphate + NAD(+) = dihydroxyacetone phosphate + NADH + H(+). The catalysed reaction is sn-glycerol 3-phosphate + NADP(+) = dihydroxyacetone phosphate + NADPH + H(+). Its pathway is membrane lipid metabolism; glycerophospholipid metabolism. Catalyzes the reduction of the glycolytic intermediate dihydroxyacetone phosphate (DHAP) to sn-glycerol 3-phosphate (G3P), the key precursor for phospholipid synthesis. The polypeptide is Glycerol-3-phosphate dehydrogenase [NAD(P)+] (Burkholderia mallei (strain ATCC 23344)).